Reading from the N-terminus, the 146-residue chain is Linear conopeptide (146 aa).

The N-terminal stretch at 1–19 (MLRLIIAAAVLVSACLAYP) is a signal peptide. A propeptide spanning residues 20–34 (QRREGAPADAANLQS) is cleaved from the precursor. A Methionine sulfoxide; partial; in Cn2 modification is found at methionine 40. Propeptides lie at residues 58 to 80 (FLPFNPNLQMGYKRDFDENLEKR) and 104 to 146 (FLHN…DKEQ). Residues 107-146 (NEKGDKHPFANVDSADTDLGQFEPSAENKNGEFRFFDKEQ) are disordered. Residues 135-146 (KNGEFRFFDKEQ) are compositionally biased toward basic and acidic residues.

Expressed by the venom duct.

The protein localises to the secreted. The protein is Linear conopeptide of Conus consors (Singed cone).